A 270-amino-acid chain; its full sequence is ParA family protein MPN_688 (270 aa).

This sequence belongs to the ParA family.

The sequence is that of ParA family protein MPN_688 from Mycoplasma pneumoniae (strain ATCC 29342 / M129 / Subtype 1) (Mycoplasmoides pneumoniae).